Here is a 459-residue protein sequence, read N- to C-terminus: MDDTIVSLKSQLLEREREVATLKKKLDQIEKGNSTLPELQEKVTSLSPLRLNTSLNNDDIMRYSRQLLLPELGVKGQIAISNISVLVVGCGGLGCPLAQYLAAAGIGRLGLLDYDVVELSNLHRQVLHTELTQGQPKALSAAQAISRMNSTVQCVPYHLQLSRENAIQLIQQYDIVADCSDNVPTRYLVNDACVLTSRPLVSASALRMEGQLTVYNYRGGPCYRCLYPIPPPPETVTNCSDGGVLGVVPGIMGCLQALEVLKIASGQECSFAQQLLMFDGEQTRFRSIRLRSRQKECVVCGEKPTITELQDYEHFCGSAATDKCRRLHLLSREQRVSVQDYKGILDHSTPHLLLDVRPKVEVDICRLSNSLHIPLASLEDKKPEHITLLKEAISDLQEHLNNQSPVQVFVVCKLGNDSQKAVQLLEKMSGAEVEAMTVKDIGGGLMAWAKKIDYCFPQY.

Residues Gly-92, Asp-113, Ser-120–Arg-124, Lys-137, and Asp-181–Asn-182 each bind ATP. Cys-222 and Cys-225 together coordinate Zn(2+). Cys-239 (glycyl thioester intermediate; for adenylyltransferase activity) is an active-site residue. Positions 297 and 300 each coordinate Zn(2+). A disulfide bridge connects residues Cys-316 and Cys-324. The region spanning His-347 to Pro-457 is the Rhodanese domain. Catalysis depends on Cys-412, which acts as the Cysteine persulfide intermediate; for sulfurtransferase activity.

In the N-terminal section; belongs to the HesA/MoeB/ThiF family. UBA4 subfamily. Zn(2+) is required as a cofactor.

It is found in the cytoplasm. It localises to the cytosol. It catalyses the reaction [molybdopterin-synthase sulfur-carrier protein]-C-terminal Gly-Gly + ATP + H(+) = [molybdopterin-synthase sulfur-carrier protein]-C-terminal Gly-Gly-AMP + diphosphate. The catalysed reaction is [molybdopterin-synthase sulfur-carrier protein]-C-terminal Gly-Gly-AMP + S-sulfanyl-L-cysteinyl-[cysteine desulfurase] + AH2 = [molybdopterin-synthase sulfur-carrier protein]-C-terminal-Gly-aminoethanethioate + L-cysteinyl-[cysteine desulfurase] + A + AMP + 2 H(+). Its pathway is tRNA modification; 5-methoxycarbonylmethyl-2-thiouridine-tRNA biosynthesis. It functions in the pathway cofactor biosynthesis; molybdopterin biosynthesis. Functionally, plays a central role in 2-thiolation of mcm(5)S(2)U at tRNA wobble positions of cytosolic tRNA(Lys), tRNA(Glu) and tRNA(Gln). Also essential during biosynthesis of the molybdenum cofactor. Acts by mediating the C-terminal thiocarboxylation of sulfur carriers urm1 and mocs2a. Its N-terminus first activates urm1 and mocs2a as acyl-adenylates (-COAMP), then the persulfide sulfur on the catalytic cysteine is transferred to urm1 and mocs2a to form thiocarboxylation (-COSH) of their C-terminus. The reaction probably involves hydrogen sulfide that is generated from the persulfide intermediate and that acts as a nucleophile towards urm1 and mocs2a. Subsequently, a transient disulfide bond is formed. Does not use thiosulfate as sulfur donor; nfs1 probably acting as a sulfur donor for thiocarboxylation reactions. This Danio rerio (Zebrafish) protein is Adenylyltransferase and sulfurtransferase MOCS3 (mocs3).